Consider the following 299-residue polypeptide: RGG repeats nuclear RNA binding protein A (299 aa).

Residues 1–21 (RGGGRGGPRGGGRGRGPGRGR) are compositionally biased toward gly residues. Disordered regions lie at residues 1–173 (RGGG…KEMT) and 232–299 (EAVE…LVAK). Basic and acidic residues predominate over residues 45 to 60 (RVQEDGESGKLSERRG). Residues 61 to 78 (GYGGPRGGFHGGRRGGFN) are compositionally biased toward gly residues. Composition is skewed to basic and acidic residues over residues 86 to 98 (EGERPRRVFDRRS) and 134 to 146 (DGEKIVEAEKEAG). The Arginine-rich RNA-binding motif E-R-P-R-R-X-[F/Y]-[E/D]-R-R-S motif lies at 88–98 (ERPRRVFDRRS). A compositionally biased stretch (gly residues) spans 267–278 (RGRGGFGGGVGG).

Belongs to the SERBP1-HABP4 family. Expressed in seedlings but not in roots.

Its subcellular location is the nucleus. The protein resides in the cytoplasm. It is found in the perinuclear region. Ribosome-binding protein that acts as a regulator of mRNA translation by promoting ribosome inactivation. Binds RNA. This is RGG repeats nuclear RNA binding protein A from Nicotiana tabacum (Common tobacco).